A 129-amino-acid polypeptide reads, in one-letter code: M-zodatoxin-Lt8a (129 aa).

An N-terminal signal peptide occupies residues 1-20 (MKYFVVALALVAAFACIAES). Residues 21–60 (KPAESEHELAEVEEENELADLEDAVWLEHLADLSDLEEAR) constitute a propeptide that is removed on maturation. The Processing quadruplet motif signature appears at 57 to 60 (EEAR).

Belongs to the cationic peptide 06 (cytoinsectotoxin) family. In terms of processing, cleavage of the propeptide depends on the processing quadruplet motif (XXXR, with at least one of X being E). In terms of tissue distribution, expressed by the venom gland.

The protein resides in the secreted. Its function is as follows. Insecticidal, cytolytic and antimicrobial peptide. Has insecticidal activity against the flesh fly S.carnaria, and against the cockroach N.cinerea. Has insecticidal activity against D.melanogaster. Has hemolytic activity against human erythrocytes (EC(50)=6 uM). Has cytolytic activity against insect Sf9 cells (EC(50)=1 uM) and human leukocytes (EC(50)=3 uM). Has antibacterial activity against the Gram-positive bacteria A.globiformis VKM Ac-1112 (MIC=0.5 uM), and B.subtilis VKM B-501 (MIC=0.6-0.9 uM), and against the Gram-negative bacteria E.coli C600 (MIC=0.5 uM), E.coli DH5alpha (MIC=0.9 uM), E.coli MH1 (MIC=0.5 uM), P.aeruginosa PAO1 (MIC=1.9 uM), and P.fluorescens VKM B-894 (MIC=3.8 uM). Lacks antimicrobial activity against the Gram-positive bacteria M.luteus and S.aureus, and against the Gram-negative bacterium S.marcescens. Forms voltage-dependent, ion-permeable channels in membranes. At high concentration causes cell membrane lysis. The sequence is that of M-zodatoxin-Lt8a (cit 1-1) from Lachesana tarabaevi (Spider).